The chain runs to 1063 residues: Structural polyprotein (1063 aa).

Residues 1–131 form a disordered region; it reads MASTTPITME…LGPPTNPFQA (131 aa). The human C1QBP/SF2P32-binding stretch occupies residues 30-69; the sequence is GASQSRRPRPPRQRDSSTSGDDSGRDSGGPRRRRGNRGRG. The residue at position 46 (S46) is a Phosphoserine; by host. Residues 59 to 69 are compositionally biased toward basic residues; sequence PRRRRGNRGRG. Pro residues predominate over residues 93–107; sequence APKPSRAPPQQPQPP. Residues C153 and C197 are joined by a disulfide bond. Positions 279–300 are functions as E2 signal peptide; the sequence is GAPQAFLAGLLLAAVAVGTARA. Over 301–534 the chain is Extracellular; it reads GLQPRADMAA…LWLATANALS (234 aa). A disordered region spans residues 305–347; the sequence is RADMAAPPAPPQPPCAHGQHYGHHHHQLPFLGHDGHHGGTLRV. 4 N-linked (GlcNAc...) asparagine; by host glycosylation sites follow: N353, N371, N410, and N429. Residues 535-555 form a helical membrane-spanning segment; that stretch reads LDHALAAFVLLFPWVLIFMVC. Residues 556–582 lie on the Cytoplasmic side of the membrane; the sequence is RRACRRRGAAAALTAVVLQGYNPPAYG. The segment at 563–582 is functions as E1 signal peptide; the sequence is GAAAALTAVVLQGYNPPAYG. Residues 583-1028 are Extracellular-facing; sequence EEAFTYLCTA…QTWAEWAAAH (446 aa). 8 disulfide bridges follow: C590/C595, C619/C824, C641/C653, C699/C712, C758/C767, C807/C817, C931/C934, and C950/C983. N658 carries N-linked (GlcNAc...) asparagine; by host glycosylation. 2 residues coordinate Ca(2+): N670 and A671. Residues D718 and T719 each coordinate Ca(2+). N-linked (GlcNAc...) asparagine; by host glycosylation is found at N759 and N791. Residues T1011 and T1012 are each glycosylated (O-linked (GalNAc...) threonine; by host). Residues 1029–1049 form a helical membrane-spanning segment; it reads WWQLTLGAVCALLLAGLLACC. Residues 1050–1063 lie on the Extracellular side of the membrane; the sequence is AKCLYYLRGAIAPR.

In terms of assembly, homodimer; further assembles into homooligomer. Interacts with human C1QBP. Interacts (via N-terminus) with protease/methyltransferase p150. As to quaternary structure, heterodimer with spike glycoprotein E2. Heterodimer with spike glycoprotein E1. In terms of processing, structural polyprotein: Specific enzymatic cleavages in vivo yield mature proteins. Two signal peptidase-mediated cleavages within the polyprotein produce the structural proteins capsid, E2, and E1. The E2 signal peptide remains attached to the C-terminus of the capsid protein after cleavage by the signal peptidase. Another signal peptide at E2 C-terminus directs E1 to the ER, with a similar mechanism. Contains three N-linked oligosaccharides. Post-translationally, capsid is phosphorylated on Ser-46 by host. This phosphorylation negatively regulates capsid protein RNA-binding activity. Dephosphorylated by human PP1A.

The protein resides in the virion. The protein localises to the host cytoplasm. Its subcellular location is the host mitochondrion. It is found in the virion membrane. It localises to the host Golgi apparatus membrane. Capsid protein interacts with genomic RNA and assembles into icosahedric core particles 65-70 nm in diameter. The resulting nucleocapsid eventually associates with the cytoplasmic domain of E2 at the cell membrane, leading to budding and formation of mature virions from host Golgi membranes. Phosphorylation negatively regulates RNA-binding activity, possibly delaying virion assembly during the viral replication phase. Capsid protein dimerizes and becomes disulfide-linked in the virion. Modulates genomic RNA replication. Modulates subgenomic RNA synthesis by interacting with human C1QBP/SF2P32. Induces both perinuclear clustering of mitochondria and the formation of electron-dense intermitochondrial plaques, both hallmarks of rubella virus infected cells. Induces apoptosis when expressed in transfected cells. Its function is as follows. Responsible for viral attachment to target host cell, by binding to the cell receptor. Its transport to the plasma membrane depends on interaction with E1 protein. The surface glycoproteins display an irregular helical organization and a pseudo-tetrameric inner nucleocapsid arrangement. In terms of biological role, class II viral fusion protein. Fusion activity is inactive as long as E1 is bound to E2 in mature virion. After virus attachment to target cell and clathrin-mediated endocytosis, acidification of the endosome would induce dissociation of E1/E2 heterodimer and concomitant trimerization of the E1 subunits. This E1 homotrimer is fusion active, and promotes release of viral nucleocapsid in cytoplasm after endosome and viral membrane fusion. The cytoplasmic tail of spike glycoprotein E1 modulates virus release. The surface glycoproteins display an irregular helical organization and a pseudo-tetrameric inner nucleocapsid arrangement. The chain is Structural polyprotein from Rubella virus (strain RN-UK86) (RUBV).